The sequence spans 464 residues: Trehalose-6-phosphate synthase (464 aa).

Residue Arg10 coordinates D-glucose 6-phosphate. Position 23–24 (23–24 (GG)) interacts with UDP-alpha-D-glucose. Residues Tyr81 and Asp135 each coordinate D-glucose 6-phosphate. 2 residues coordinate UDP-alpha-D-glucose: Arg268 and Lys273. Arg306 provides a ligand contact to D-glucose 6-phosphate. Residue 371–375 (LVAKE) coordinates UDP-alpha-D-glucose.

Belongs to the glycosyltransferase 20 family. As to quaternary structure, homotetramer.

The catalysed reaction is D-glucose 6-phosphate + UDP-alpha-D-glucose = alpha,alpha-trehalose 6-phosphate + UDP + H(+). The protein operates within glycan biosynthesis; trehalose biosynthesis. Its function is as follows. Probably involved in the osmoprotection via the biosynthesis of trehalose. Catalyzes the transfer of glucose from UDP-alpha-D-glucose (UDP-Glc) to D-glucose 6-phosphate (Glc-6-P) to form trehalose-6-phosphate. Acts with retention of the anomeric configuration of the UDP-sugar donor. This chain is Trehalose-6-phosphate synthase, found in Sinorhizobium fredii (strain NBRC 101917 / NGR234).